A 398-amino-acid chain; its full sequence is Probable RNA methyltransferase sce1580 (398 aa).

The segment at 1 to 24 (MRVPEIPEETASPLRAGDPPAQVA) is disordered. E140 (proton acceptor) is an active-site residue. The Radical SAM core domain maps to 146–378 (GPARTTLCVS…TLVRRPRGRD (233 aa)). Cysteines 153 and 383 form a disulfide. C160, C164, and C167 together coordinate [4Fe-4S] cluster. Residues 211-212 (GE), S243, 265-267 (SLN), and N340 each bind S-adenosyl-L-methionine. The active-site S-methylcysteine intermediate is C383.

Belongs to the radical SAM superfamily. RlmN family. [4Fe-4S] cluster serves as cofactor.

The protein localises to the cytoplasm. This is Probable RNA methyltransferase sce1580 from Sorangium cellulosum (strain So ce56) (Polyangium cellulosum (strain So ce56)).